A 25-amino-acid polypeptide reads, in one-letter code: Small ribosomal subunit protein eS32 (25 aa).

Residues 1 to 25 (MRAKWRKKRVRRLKRKRRKVRARSK) form a disordered region.

It belongs to the eukaryotic ribosomal protein eS32 family. As to quaternary structure, component of the small ribosomal subunit.

This is Small ribosomal subunit protein eS32 (RPL41) from Eremothecium gossypii (strain ATCC 10895 / CBS 109.51 / FGSC 9923 / NRRL Y-1056) (Yeast).